Consider the following 669-residue polypeptide: MTGLFQLVSSYSPSGDQPTAVQKLVTNFHAGIAKQVLLGVTGSGKTYTIANVVEQIQKPTLVMAPNKTLAAQLYGEFKAFFPHNAVEYFVSYYDYYQPEAYVPASDTFIEKDSSINEYIEQMRLAATKALLSRSDVLVVATVSAIYGLGAPEDYLSLRLILSLGEHIEQRQLIRHLTELQYTRNELDLVRGSFRVRGEVVDVFPAESEMEALRIELFDGEIESLSLFDPLTGQTVRKLQRYSVYPKTHYATTRERTLSAVDTIKDELKEYLELLYGRNKLVEAQRLAQRTQFDLEMMAEVGYCNGIENYSRHLTGKAPGEPPPTLFDYLPPDALLVIDESHVTIPQIGAMFKGDRSRKETLVEFGFRLPSALDNRPLRFEEWEVRSPRSIYVSATPGSYEFRESAGEVIELLVRPTGLIDPEIEIRPVATQVDDLISQINVCIKLGDRVLVTTLTKRMAENLTEYLSEQGIRIRYLHSEIDTVERVEIIRDLRLGKFDVLVGINLLREGLDMPEVSLVAILDADKEGFLRSTSSLIQTIGRAARSVRGRAILYADKVTRSMRAAIDETERRRQKQKEYNAENGIVPKSVVRPISDILEGARDGVEVKSKGKGRRVDEVPADYCALNQAEIAAQMKVLEQQMYQHARDLEFEDAARIRDQIQRLREAGLG.

A Helicase ATP-binding domain is found at 26 to 414 (TNFHAGIAKQ…AGEVIELLVR (389 aa)). 39–46 (GVTGSGKT) is an ATP binding site. The short motif at 92-115 (YYDYYQPEAYVPASDTFIEKDSSI) is the Beta-hairpin element. The Helicase C-terminal domain maps to 435–597 (LISQINVCIK…SVVRPISDIL (163 aa)). The UVR domain occupies 631-666 (AAQMKVLEQQMYQHARDLEFEDAARIRDQIQRLREA).

It belongs to the UvrB family. In terms of assembly, forms a heterotetramer with UvrA during the search for lesions. Interacts with UvrC in an incision complex.

Its subcellular location is the cytoplasm. Its function is as follows. The UvrABC repair system catalyzes the recognition and processing of DNA lesions. A damage recognition complex composed of 2 UvrA and 2 UvrB subunits scans DNA for abnormalities. Upon binding of the UvrA(2)B(2) complex to a putative damaged site, the DNA wraps around one UvrB monomer. DNA wrap is dependent on ATP binding by UvrB and probably causes local melting of the DNA helix, facilitating insertion of UvrB beta-hairpin between the DNA strands. Then UvrB probes one DNA strand for the presence of a lesion. If a lesion is found the UvrA subunits dissociate and the UvrB-DNA preincision complex is formed. This complex is subsequently bound by UvrC and the second UvrB is released. If no lesion is found, the DNA wraps around the other UvrB subunit that will check the other stand for damage. The protein is UvrABC system protein B of Xylella fastidiosa (strain 9a5c).